The primary structure comprises 610 residues: Putative sensor histidine kinase NtrY-like (610 aa).

4 helical membrane passes run 18 to 38, 49 to 69, 92 to 112, and 292 to 312; these read IGIL…TISI, KVIW…ILLT, IVVA…ISSA, and IIFI…GVIV. Positions 314–368 constitute an HAMP domain; it reads AKIVNPIKKLVIATDKVKSGDLTVQVPENEVDKDEIGTLYAAFNRMIKQLSRQQR. Positions 385–596 constitute a Histidine kinase domain; that stretch reads KVAHEIKNPL…VIDIRFNLEE (212 aa). His388 is modified (phosphohistidine; by autocatalysis).

Its subcellular location is the cell membrane. The enzyme catalyses ATP + protein L-histidine = ADP + protein N-phospho-L-histidine.. Its function is as follows. Member of the two-component regulatory system RBE_0470/RBE_0312. This chain is Putative sensor histidine kinase NtrY-like, found in Rickettsia bellii (strain RML369-C).